The following is a 177-amino-acid chain: Interleukin-1 receptor antagonist protein (177 aa).

Positions 1–25 (MEICRGLRSHLITLLLFLFHSETIC) are cleaved as a signal peptide. An intrachain disulfide couples Cys-91 to Cys-141. A glycan (N-linked (GlcNAc...) asparagine) is linked at Asn-109.

This sequence belongs to the IL-1 family. The intracellular form of IL1RN is predominantly expressed in epithelial cells.

It is found in the secreted. Its subcellular location is the cytoplasm. In terms of biological role, anti-inflammatory antagonist of interleukin-1 family of proinflammatory cytokines such as interleukin-1beta/IL1B and interleukin-1alpha/IL1A. Protects from immune dysregulation and uncontrolled systemic inflammation triggered by IL1 for a range of innate stimulatory agents such as pathogens. The protein is Interleukin-1 receptor antagonist protein (IL1RN) of Homo sapiens (Human).